A 165-amino-acid polypeptide reads, in one-letter code: Iron sulfur cluster assembly protein 1, mitochondrial (165 aa).

A mitochondrion-targeting transit peptide spans 1 to 27 (MLPVITRFARPALMAIRPVNAMGVLRA). Positions 132-136 (LPPVK) are SSQ1 binding region.

It belongs to the NifU family. Homodimer, but can exist as monomers or trimers. Oligomerization may be regulated by Zn(2+) availability. Component of the core Fe-S cluster (ISC) assembly machinery. Interacts with YFH1/frataxin with a 1 to 1 stoichiometry; the interaction is direct. Interacts with the mitochondrial co-chaperones JAC1 and SSQ1. Interacts with NFS1. Interacts with YAH1/ferredoxin; interacts with the reduced form. [2Fe-2S] cluster serves as cofactor. The cofactor is Zn(2+).

Its subcellular location is the mitochondrion matrix. It functions in the pathway cofactor biosynthesis; iron-sulfur cluster biosynthesis. Scaffold protein for the de novo synthesis of iron-sulfur (Fe-S) clusters within mitochondria, which is required for maturation of both mitochondrial and cytoplasmic [2Fe-2S] and [4Fe-4S] proteins. First, a [2Fe-2S] cluster is transiently assembled on the scaffold proteins ISU1 and ISU2. In a second step, the cluster is released from ISU1/ISU2, transferred to glutaredoxin GRX5, followed by the formation of mitochondrial [2Fe-2S] proteins, the synthesis of [4Fe-4S] clusters and their target-specific insertion into the recipient apoproteins. Cluster assembly on ISU1/ISU2 depends on the function of the cysteine desulfurase complex NFS1-ISD11, which serves as the sulfur donor for cluster synthesis, the iron-binding protein frataxin (YFH1) as the putative iron donor, and the electron transfer chain comprised of ferredoxin reductase ARH1 and ferredoxin YAH1, which receive their electrons from NADH. Fe-S cluster release from ISU1/ISU2 is achieved by interaction with the Hsp70 chaperone SSQ1, assisted by the DnaJ-like co-chaperone JAC1 and the nucleotide exchange factor MGE1. ISU1 is the major isoform in yeast, while ISU2 is not detectable in cells grown to stationary phase. Also involved in production of a sulfur precursor required for thiolation of cytoplasmic tRNAs. This is Iron sulfur cluster assembly protein 1, mitochondrial from Saccharomyces cerevisiae (strain ATCC 204508 / S288c) (Baker's yeast).